Reading from the N-terminus, the 104-residue chain is Proteasome subunit beta type-8 (104 aa).

This sequence belongs to the peptidase T1B family. In terms of assembly, the 26S proteasome consists of a 20S proteasome core and two 19S regulatory subunits. The 20S proteasome core is composed of 28 subunits that are arranged in four stacked rings, resulting in a barrel-shaped structure. The two end rings are each formed by seven alpha subunits, and the two central rings are each formed by seven beta subunits. The catalytic chamber with the active sites is on the inside of the barrel. Component of the immunoproteasome, where it displaces the equivalent housekeeping subunit PSMB5. Component of the spermatoproteasome, a form of the proteasome specifically found in testis. Directly interacts with POMP.

Its subcellular location is the cytoplasm. It localises to the nucleus. It catalyses the reaction Cleavage of peptide bonds with very broad specificity.. In terms of biological role, the proteasome is a multicatalytic proteinase complex which is characterized by its ability to cleave peptides with Arg, Phe, Tyr, Leu, and Glu adjacent to the leaving group at neutral or slightly basic pH. The proteasome has an ATP-dependent proteolytic activity. This subunit is involved in antigen processing to generate class I binding peptides. May participate in the generation of spliced peptides resulting from the ligation of two separate proteasomal cleavage products that are not contiguous in the parental protein. Required for adipocyte differentiation. This Sus scrofa (Pig) protein is Proteasome subunit beta type-8 (PSMB8).